The sequence spans 314 residues: Protein OPG185 (314 aa).

An N-terminal signal peptide occupies residues Met-1 to Ala-16. An Ig-like V-type domain is found at Thr-17–Glu-121. Topologically, residues Thr-17–Glu-278 are virion surface. Cys-34 and Cys-103 are oxidised to a cystine. N-linked (GlcNAc...) asparagine; by host glycosylation is found at Asn-37, Asn-69, Asn-112, and Asn-161. The segment covering Asn-193–Ser-202 has biased composition (polar residues). A disordered region spans residues Asn-193–Lys-214. Residue Asn-253 is glycosylated (N-linked (GlcNAc...) asparagine; by host). Residues Ile-279–Asn-302 form a helical membrane-spanning segment. Residues Lys-303 to Val-314 lie on the Intravirion side of the membrane.

Belongs to the orthopoxvirus OPG185 family. As to quaternary structure, heterodimerizes with OPG040. The heterodimer OPG185-OPG040 interacts with components of the entry fusion complex OPG143 and OPG094. Heterodimer with C3/VPC protein; disulfide-linked. Glycosylated; contains phosphate and sulfate-substituted glycans. O-glycosylation is required for hemagglutination and hemadsorption activities of infected cell membranes.

It localises to the virion membrane. Its subcellular location is the host membrane. Prevents cell to cell fusion by interacting with and directing the viral OPG040 protein on the host plasma membrane. The OPG185-OPG040 complex associates with components of the entry fusion complex (EFC) presumably to avoid superinfection and syncytium formation. Via its interaction with C3/VCP protein, protects the infected cell and probably also the extracellular enveloped virus from complement attack. The sequence is that of Protein OPG185 (OPG185) from Bos taurus (Bovine).